The primary structure comprises 525 residues: ATP synthase subunit alpha (525 aa).

An ATP-binding site is contributed by glycine 171–serine 178.

Belongs to the ATPase alpha/beta chains family. F-type ATPases have 2 components, CF(1) - the catalytic core - and CF(0) - the membrane proton channel. CF(1) has five subunits: alpha(3), beta(3), gamma(1), delta(1), epsilon(1). CF(0) has three main subunits: a(1), b(2) and c(9-12). The alpha and beta chains form an alternating ring which encloses part of the gamma chain. CF(1) is attached to CF(0) by a central stalk formed by the gamma and epsilon chains, while a peripheral stalk is formed by the delta and b chains.

The protein localises to the cell inner membrane. It carries out the reaction ATP + H2O + 4 H(+)(in) = ADP + phosphate + 5 H(+)(out). In terms of biological role, produces ATP from ADP in the presence of a proton gradient across the membrane. The alpha chain is a regulatory subunit. The sequence is that of ATP synthase subunit alpha from Flavobacterium psychrophilum (strain ATCC 49511 / DSM 21280 / CIP 103535 / JIP02/86).